Consider the following 883-residue polypeptide: Phosphoenolpyruvate carboxylase (883 aa).

Active-site residues include His138 and Lys546.

This sequence belongs to the PEPCase type 1 family. Mg(2+) serves as cofactor.

It carries out the reaction oxaloacetate + phosphate = phosphoenolpyruvate + hydrogencarbonate. Its function is as follows. Forms oxaloacetate, a four-carbon dicarboxylic acid source for the tricarboxylic acid cycle. This chain is Phosphoenolpyruvate carboxylase, found in Salmonella schwarzengrund (strain CVM19633).